The following is a 226-amino-acid chain: Leucyl/phenylalanyl-tRNA--protein transferase (226 aa).

It belongs to the L/F-transferase family.

It is found in the cytoplasm. It carries out the reaction N-terminal L-lysyl-[protein] + L-leucyl-tRNA(Leu) = N-terminal L-leucyl-L-lysyl-[protein] + tRNA(Leu) + H(+). The enzyme catalyses N-terminal L-arginyl-[protein] + L-leucyl-tRNA(Leu) = N-terminal L-leucyl-L-arginyl-[protein] + tRNA(Leu) + H(+). The catalysed reaction is L-phenylalanyl-tRNA(Phe) + an N-terminal L-alpha-aminoacyl-[protein] = an N-terminal L-phenylalanyl-L-alpha-aminoacyl-[protein] + tRNA(Phe). Functionally, functions in the N-end rule pathway of protein degradation where it conjugates Leu, Phe and, less efficiently, Met from aminoacyl-tRNAs to the N-termini of proteins containing an N-terminal arginine or lysine. In Pseudomonas aeruginosa (strain UCBPP-PA14), this protein is Leucyl/phenylalanyl-tRNA--protein transferase.